We begin with the raw amino-acid sequence, 448 residues long: UDP-glucose 6-dehydrogenase (448 aa).

Residues 2–19 (NITF…GIIM), V11, D30, K35, T121, and E152 contribute to the NAD(+) site. Substrate-binding positions include 148 to 152 (EFLRE), K204, N208, 249 to 253 (FLNAG), and G257. The active-site Nucleophile is C260. K263 serves as a coordination point for NAD(+). Substrate is bound at residue K321. R328 contributes to the NAD(+) binding site.

The protein belongs to the UDP-glucose/GDP-mannose dehydrogenase family.

The catalysed reaction is UDP-alpha-D-glucose + 2 NAD(+) + H2O = UDP-alpha-D-glucuronate + 2 NADH + 3 H(+). Its pathway is nucleotide-sugar biosynthesis; UDP-alpha-D-glucuronate biosynthesis; UDP-alpha-D-glucuronate from UDP-alpha-D-glucose: step 1/1. In Rickettsia felis (strain ATCC VR-1525 / URRWXCal2) (Rickettsia azadi), this protein is UDP-glucose 6-dehydrogenase (udg).